The sequence spans 856 residues: MISPDKQYETDTNLYNPSEIEKKWQSIWTENNLYKTDELTENSDKFYALSMFPYPSGNLHMGHVRNYVITDLIARFQRFKGKSVLHPMGWDAFGLPAENAAIERGISPSVWTKKNISHMKSQLKLLGLSVDWDREFATCDENYYIWTQYLFLELYKAGLVYQKESEVNWDPIDNTVLANEQVDSEGKSWRSGALVEKKLLKQWFLRITNYADELLKDLEKLDNWPERVKIMQDNWIGKSIGTNINFNINTNPEKKITVFTTRPDTLFGVTYLAISINHSLIKNISDQETIQDIENLKQYLKNNKNNELEKIGIKTSLIAINPVNSEPIPIWVASYVLDEYGTGAVMGVPAHDLRDFEFAKKNNIDIKHVIIKDKSEKTKELDEAYVENGYLINSNHFNGIANTIAKLKISEEGVNNGWAENKIQYRLRDWLISRQRYWGCPIPIVNCKKCGSVPLNQSELPVALPKDIDISANKINALGDNYNWINTTCPKCGIAAKKETDTMDTFMCSSWYFLRYPSSRCSTKPFEKIEINNWLPVDQYVGGVEHAILHLLYARFFTKALRDNELFEIDEPFKKLLTQGMVQSAAYKNNKTGKYISPSDINDLSNPTDPIDNSKLEVLFEKMSKSKYNGIDPESVIKKYGADTARMFILFKAPPEKDLEWGDSDVEGQFRFLSRIWKLYISCSKDINSKSKSYPNKEKTLIKSMNIAIKEITNDISNNQFNTAISELMKFYNSLSNNINDVNNNLKIDALKTFCILLAPFAPHISEEIWLLIGFKNSVHLEHWPSFNAEALKEDSYVLVIQVNGKVRDKININNEMNEDQIKELTLKRPNILKWTQDKEIRKIIIVKGKIMNIVV.

The 'HIGH' region signature appears at 53–63 (PYPSGNLHMGH). The 'KMSKS' region signature appears at 622 to 626 (KMSKS). Residue K625 coordinates ATP.

Belongs to the class-I aminoacyl-tRNA synthetase family.

It is found in the cytoplasm. It catalyses the reaction tRNA(Leu) + L-leucine + ATP = L-leucyl-tRNA(Leu) + AMP + diphosphate. In Prochlorococcus marinus (strain MIT 9312), this protein is Leucine--tRNA ligase.